The sequence spans 210 residues: Large ribosomal subunit protein uL3 (210 aa).

At Gln-151 the chain carries N5-methylglutamine.

It belongs to the universal ribosomal protein uL3 family. As to quaternary structure, part of the 50S ribosomal subunit. Forms a cluster with proteins L14 and L19. Methylated by PrmB.

Its function is as follows. One of the primary rRNA binding proteins, it binds directly near the 3'-end of the 23S rRNA, where it nucleates assembly of the 50S subunit. This chain is Large ribosomal subunit protein uL3, found in Aeromonas hydrophila subsp. hydrophila (strain ATCC 7966 / DSM 30187 / BCRC 13018 / CCUG 14551 / JCM 1027 / KCTC 2358 / NCIMB 9240 / NCTC 8049).